We begin with the raw amino-acid sequence, 883 residues long: Phosphoenolpyruvate carboxylase (883 aa).

Residues H138 and K546 contribute to the active site.

The protein belongs to the PEPCase type 1 family. Mg(2+) is required as a cofactor.

It catalyses the reaction oxaloacetate + phosphate = phosphoenolpyruvate + hydrogencarbonate. Functionally, forms oxaloacetate, a four-carbon dicarboxylic acid source for the tricarboxylic acid cycle. This Salmonella choleraesuis (strain SC-B67) protein is Phosphoenolpyruvate carboxylase.